The chain runs to 505 residues: ATP synthase subunit alpha (505 aa).

Residue 171–178 coordinates ATP; it reads GDRQTGKT.

Belongs to the ATPase alpha/beta chains family. In terms of assembly, F-type ATPases have 2 components, CF(1) - the catalytic core - and CF(0) - the membrane proton channel. CF(1) has five subunits: alpha(3), beta(3), gamma(1), delta(1), epsilon(1). CF(0) has three main subunits: a(1), b(2) and c(9-12). The alpha and beta chains form an alternating ring which encloses part of the gamma chain. CF(1) is attached to CF(0) by a central stalk formed by the gamma and epsilon chains, while a peripheral stalk is formed by the delta and b chains.

It is found in the cell inner membrane. The catalysed reaction is ATP + H2O + 4 H(+)(in) = ADP + phosphate + 5 H(+)(out). Functionally, produces ATP from ADP in the presence of a proton gradient across the membrane. The alpha chain is a regulatory subunit. This chain is ATP synthase subunit alpha, found in Nitratiruptor sp. (strain SB155-2).